A 967-amino-acid chain; its full sequence is Vitamin B12-dependent ribonucleotide reductase (967 aa).

The interval 1-23 (MTETASGPARSSRAKGTKAGKGL) is disordered. Substrate is bound by residues Ser143, 159 to 160 (AC), Gly188, 364 to 368 (NPCSE), and 554 to 558 (PTGTI). Cys160 and Cys377 form a disulfide bridge. The active-site Proton acceptor is the Asn364. Cys366 functions as the Cysteine radical intermediate in the catalytic mechanism. Catalysis depends on Glu368, which acts as the Proton acceptor.

It belongs to the ribonucleoside diphosphate reductase class-2 family. Requires adenosylcob(III)alamin as cofactor.

The catalysed reaction is a 2'-deoxyribonucleoside 5'-diphosphate + [thioredoxin]-disulfide + H2O = a ribonucleoside 5'-diphosphate + [thioredoxin]-dithiol. Catalyzes the reduction of ribonucleotides to deoxyribonucleotides. May function to provide a pool of deoxyribonucleotide precursors for DNA repair during oxygen limitation and/or for immediate growth after restoration of oxygen. The polypeptide is Vitamin B12-dependent ribonucleotide reductase (nrdJ) (Streptomyces coelicolor (strain ATCC BAA-471 / A3(2) / M145)).